Consider the following 58-residue polypeptide: Sperm protamine P2 (58 aa).

Positions Arg-1–Lys-58 are disordered.

In terms of tissue distribution, gonads.

It is found in the nucleus. Its subcellular location is the chromosome. In terms of biological role, protamines substitute for histones in the chromatin of sperm during the haploid phase of spermatogenesis. They compact sperm DNA into a highly condensed, stable and inactive complex. The polypeptide is Sperm protamine P2 (Bolinus brandaris (Purple dye murex)).